Consider the following 539-residue polypeptide: Squalene monooxygenase SE1 (539 aa).

Transmembrane regions (helical) follow at residues 22–42 (LLID…FLLL) and 71–91 (IAGS…ALAY). FAD is bound by residues 84–85 (VA), 104–105 (ER), arginine 112, arginine 183, valine 199, aspartate 361, and methionine 374. Residues 472–492 (LFLHFFAVAIYGVGRLLIPFP) traverse the membrane as a helical segment.

Belongs to the squalene monooxygenase family. It depends on FAD as a cofactor. In terms of tissue distribution, mostly expressed in flower buds and leaves, and, to a lower extent, at high levels thought, in roots and petioles. In petioles, preferentially observed in vascular bundle tissue (phloem cells and parenchymatous cells near xylem) and resin ducts.

The protein resides in the microsome membrane. It is found in the endoplasmic reticulum membrane. The enzyme catalyses squalene + reduced [NADPH--hemoprotein reductase] + O2 = (S)-2,3-epoxysqualene + oxidized [NADPH--hemoprotein reductase] + H2O + H(+). It functions in the pathway terpene metabolism; lanosterol biosynthesis; lanosterol from farnesyl diphosphate: step 2/3. Component of the triterpene saponins (e.g. ginsenosides or panaxosides) and phytosterols biosynthetic pathways. Catalyzes the first oxygenation step in sterol biosynthesis and is suggested to be one of the rate-limiting enzymes in this pathway. This is Squalene monooxygenase SE1 from Panax ginseng (Korean ginseng).